Here is a 261-residue protein sequence, read N- to C-terminus: uncharacterized protein (261 aa).

Positions 1–236 constitute an ABC transporter domain; it reads MEIKEITIIG…SRKINEVDNW (236 aa). Residue 36–43 participates in ATP binding; it reads GPTGSGKS.

This sequence belongs to the ABC transporter superfamily.

This is an uncharacterized protein from Methanocaldococcus jannaschii (strain ATCC 43067 / DSM 2661 / JAL-1 / JCM 10045 / NBRC 100440) (Methanococcus jannaschii).